The following is a 329-amino-acid chain: Cytoplasmic phosphatidylinositol transfer protein 1 (329 aa).

The segment at serine 267–glutamate 329 is disordered.

The protein belongs to the PtdIns transfer protein family. PI transfer class IIB subfamily.

The protein resides in the cytoplasm. The enzyme catalyses a 1,2-diacyl-sn-glycero-3-phospho-(1D-myo-inositol)(in) = a 1,2-diacyl-sn-glycero-3-phospho-(1D-myo-inositol)(out). The catalysed reaction is a 1,2-diacyl-sn-glycero-3-phosphate(in) = a 1,2-diacyl-sn-glycero-3-phosphate(out). Functionally, catalyzes the transfer of phosphatidylinositol (PI) and phosphatidic acid (PA) between membranes. Binds PA derived from the phospholipase D signaling pathway and among the cellular PA species, preferably binds to the C16:0/16:1 and C16:1/18:1 PA species. This is Cytoplasmic phosphatidylinositol transfer protein 1 (pitpnc1) from Xenopus tropicalis (Western clawed frog).